The sequence spans 689 residues: Glycine--tRNA ligase beta subunit (689 aa).

The protein belongs to the class-II aminoacyl-tRNA synthetase family. Tetramer of two alpha and two beta subunits.

The protein localises to the cytoplasm. It catalyses the reaction tRNA(Gly) + glycine + ATP = glycyl-tRNA(Gly) + AMP + diphosphate. In Pasteurella multocida (strain Pm70), this protein is Glycine--tRNA ligase beta subunit (glyS).